We begin with the raw amino-acid sequence, 281 residues long: Cell growth regulator with EF hand domain protein 1 (281 aa).

Residues 1-21 (MFQWLMQALMLPLLLLPLGRA) form the signal peptide. 2 consecutive EF-hand domains span residues 71–106 (DREQVLLSLFALHDYDQNGQLDGLELLSMLTAALAP) and 115–150 (PVILVVDSVLETQDLDGDGLMTPAELINFPEVPKHT). Ca(2+) contacts are provided by Asp-84, Asp-86, Asn-88, Gln-90, Glu-95, Asp-128, Asp-130, Asp-132, and Glu-139. Residues 148-281 (KHTESLPPAL…HSIQLENDEI (134 aa)) form a disordered region. The span at 168 to 183 (LLANSPLQSETQQSLG) shows a compositional bias: polar residues. A compositionally biased stretch (basic and acidic residues) spans 184–213 (TKEEIRGQVEAKRASLEPEQEAGHQTEGKV). Phosphoserine occurs at positions 217 and 228. A compositionally biased stretch (basic and acidic residues) spans 237–256 (EGAEEQVEIKDNEGEAKELL).

Post-translationally, probably digested extracellularly by an unknown serine protease generating extremely hydrophobic bioactive peptides.

It is found in the secreted. Functionally, mediates cell-cell adhesion in a calcium-dependent manner. Able to inhibit growth in several cell lines. The protein is Cell growth regulator with EF hand domain protein 1 of Mus musculus (Mouse).